A 205-amino-acid chain; its full sequence is Recombination protein RecR (205 aa).

A C4-type zinc finger spans residues 58 to 73; it reads CKKCHTISDHELCAIC. Residues 81 to 177 enclose the Toprim domain; sequence RVVCIVEDIR…KISTIARGIP (97 aa).

It belongs to the RecR family.

In terms of biological role, may play a role in DNA repair. It seems to be involved in an RecBC-independent recombinational process of DNA repair. It may act with RecF and RecO. The protein is Recombination protein RecR of Cytophaga hutchinsonii (strain ATCC 33406 / DSM 1761 / CIP 103989 / NBRC 15051 / NCIMB 9469 / D465).